The following is a 191-amino-acid chain: Sporulation-specific protein (191 aa).

Its function is as follows. Not essential for sporulation. The sequence is that of Sporulation-specific protein (SPR6) from Saccharomyces cerevisiae (strain ATCC 204508 / S288c) (Baker's yeast).